We begin with the raw amino-acid sequence, 180 residues long: Ribosome maturation factor RimM (180 aa).

A PRC barrel domain is found at 99–179 (NNEYYWKDIV…IVIKNWKQTF (81 aa)).

Belongs to the RimM family. Binds ribosomal protein uS19.

The protein localises to the cytoplasm. Functionally, an accessory protein needed during the final step in the assembly of 30S ribosomal subunit, possibly for assembly of the head region. Essential for efficient processing of 16S rRNA. May be needed both before and after RbfA during the maturation of 16S rRNA. It has affinity for free ribosomal 30S subunits but not for 70S ribosomes. This is Ribosome maturation factor RimM from Buchnera aphidicola subsp. Baizongia pistaciae (strain Bp).